A 481-amino-acid polypeptide reads, in one-letter code: Zinc metalloproteinase/disintegrin (481 aa).

A signal peptide spans 1–20; that stretch reads MIQVLLVTICLAVFPYQGSS. Positions 21-190 are excised as a propeptide; sequence IILESGNVDD…KASQLYLTPE (170 aa). A Peptidase M12B domain is found at 197 to 392; the sequence is RHIELAIVVD…KKPQCILNAP (196 aa). Positions 200 and 284 each coordinate Ca(2+). Cystine bridges form between C308/C387, C349/C371, and C351/C354. H333 contributes to the Zn(2+) binding site. E334 is an active-site residue. Zn(2+) is bound by residues H337 and H343. C387 and N390 together coordinate Ca(2+). The propeptide occupies 393 to 410; that stretch reads LRTDTVSTPISGNEFLEA. One can recognise a Disintegrin domain in the interval 400-481; it reads TPISGNEFLE…ADCPRNGLYG (82 aa). 6 cysteine pairs are disulfide-bonded: C414/C429, C416/C424, C423/C446, C437/C443, C442/C467, and C455/C474. Positions 459-461 match the Cell attachment site motif; sequence RGD.

The protein belongs to the venom metalloproteinase (M12B) family. P-II subfamily. P-IIa sub-subfamily. As to quaternary structure, monomer. Requires Zn(2+) as cofactor. Expressed by the venom gland.

Its subcellular location is the secreted. In terms of biological role, impairs hemostasis in the envenomed animal. Inhibits platelet aggregation induced by ADP and collagen. Acts by inhibiting fibrinogen interaction with platelet receptors GPIIb/GPIIIa (ITGA2B/ITGB3). Has antitumor-growth activity. The polypeptide is Zinc metalloproteinase/disintegrin (Protobothrops jerdonii (Jerdon's pitviper)).